A 552-amino-acid chain; its full sequence is Chaperonin GroEL (552 aa).

Residues threonine 30 to proline 33, lysine 51, aspartate 87 to threonine 91, glycine 415, asparagine 479 to alanine 481, and aspartate 495 contribute to the ATP site.

Belongs to the chaperonin (HSP60) family. In terms of assembly, forms a cylinder of 14 subunits composed of two heptameric rings stacked back-to-back. Interacts with the co-chaperonin GroES.

Its subcellular location is the cytoplasm. The enzyme catalyses ATP + H2O + a folded polypeptide = ADP + phosphate + an unfolded polypeptide.. Functionally, together with its co-chaperonin GroES, plays an essential role in assisting protein folding. The GroEL-GroES system forms a nano-cage that allows encapsulation of the non-native substrate proteins and provides a physical environment optimized to promote and accelerate protein folding. The polypeptide is Chaperonin GroEL (Stutzerimonas stutzeri (Pseudomonas stutzeri)).